The primary structure comprises 365 residues: Glutamate 5-kinase 1 (365 aa).

Lys-9 is a binding site for ATP. Substrate is bound by residues Ser-49, Asp-136, and Asn-148. ATP is bound by residues 168 to 169 (TD) and 210 to 216 (TGGMKSK). Positions 276 to 353 (SGEIIIDAGA…DELDFEKTFE (78 aa)) constitute a PUA domain.

It belongs to the glutamate 5-kinase family.

It is found in the cytoplasm. It catalyses the reaction L-glutamate + ATP = L-glutamyl 5-phosphate + ADP. Its pathway is amino-acid biosynthesis; L-proline biosynthesis; L-glutamate 5-semialdehyde from L-glutamate: step 1/2. Functionally, catalyzes the transfer of a phosphate group to glutamate to form L-glutamate 5-phosphate. In Bacillus subtilis (strain 168), this protein is Glutamate 5-kinase 1.